The following is a 259-amino-acid chain: Tryptophan synthase alpha chain (259 aa).

Active-site proton acceptor residues include E35 and D46.

The protein belongs to the TrpA family. In terms of assembly, tetramer of two alpha and two beta chains.

The catalysed reaction is (1S,2R)-1-C-(indol-3-yl)glycerol 3-phosphate + L-serine = D-glyceraldehyde 3-phosphate + L-tryptophan + H2O. It functions in the pathway amino-acid biosynthesis; L-tryptophan biosynthesis; L-tryptophan from chorismate: step 5/5. Functionally, the alpha subunit is responsible for the aldol cleavage of indoleglycerol phosphate to indole and glyceraldehyde 3-phosphate. This is Tryptophan synthase alpha chain from Methanococcus vannielii (strain ATCC 35089 / DSM 1224 / JCM 13029 / OCM 148 / SB).